A 219-amino-acid polypeptide reads, in one-letter code: Oligoribonuclease (219 aa).

One can recognise an Exonuclease domain in the interval 19–184 (LVWVDLEMTG…ADIVESIREL (166 aa)). Residue Tyr-141 is part of the active site.

The protein belongs to the oligoribonuclease family.

It localises to the cytoplasm. 3'-to-5' exoribonuclease specific for small oligoribonucleotides. This Corynebacterium glutamicum (strain R) protein is Oligoribonuclease.